The chain runs to 508 residues: Photosystem II CP47 reaction center protein (508 aa).

The next 6 helical transmembrane spans lie at 21–36 (SVHIMHTALVSGWAGS), 101–115 (IVFSGLCFLAAIWHW), 140–156 (GIHLFLAGVACFGFGAF), 203–218 (IAAGTLGILAGLFHLS), 237–252 (VLSSSIAAVFFAAFVV), and 457–472 (TFALLFFFGHIWHGAR).

Belongs to the PsbB/PsbC family. PsbB subfamily. In terms of assembly, PSII is composed of 1 copy each of membrane proteins PsbA, PsbB, PsbC, PsbD, PsbE, PsbF, PsbH, PsbI, PsbJ, PsbK, PsbL, PsbM, PsbT, PsbX, PsbY, PsbZ, Psb30/Ycf12, at least 3 peripheral proteins of the oxygen-evolving complex and a large number of cofactors. It forms dimeric complexes. It depends on Binds multiple chlorophylls. PSII binds additional chlorophylls, carotenoids and specific lipids. as a cofactor.

Its subcellular location is the plastid. It is found in the chloroplast thylakoid membrane. Its function is as follows. One of the components of the core complex of photosystem II (PSII). It binds chlorophyll and helps catalyze the primary light-induced photochemical processes of PSII. PSII is a light-driven water:plastoquinone oxidoreductase, using light energy to abstract electrons from H(2)O, generating O(2) and a proton gradient subsequently used for ATP formation. This chain is Photosystem II CP47 reaction center protein, found in Oryza sativa subsp. indica (Rice).